Here is a 270-residue protein sequence, read N- to C-terminus: Zinc transporter ZupT (270 aa).

8 helical membrane passes run Ile8–Ile28, Leu40–Leu60, Trp78–Val98, Ile131–Ala151, Ile162–Tyr182, Leu192–Phe212, Phe216–Ile236, and His250–Ile270. Residues Asn141 and Glu144 each contribute to the Fe(2+) site. Zn(2+) contacts are provided by Glu144 and His169. Asn170, Glu173, and Glu202 together coordinate Fe(2+). Glu173 is a Zn(2+) binding site.

The protein belongs to the ZIP transporter (TC 2.A.5) family. ZupT subfamily.

The protein resides in the cell membrane. The catalysed reaction is Zn(2+)(in) = Zn(2+)(out). Functionally, mediates zinc uptake. May also transport other divalent cations. This chain is Zinc transporter ZupT, found in Akkermansia muciniphila (strain ATCC BAA-835 / DSM 22959 / JCM 33894 / BCRC 81048 / CCUG 64013 / CIP 107961 / Muc).